The chain runs to 252 residues: Ribosomal RNA small subunit methyltransferase J (252 aa).

Residues 101-102 (RD), 117-118 (ER), 153-154 (SS), and D171 contribute to the S-adenosyl-L-methionine site.

The protein belongs to the methyltransferase superfamily. RsmJ family.

It localises to the cytoplasm. It catalyses the reaction guanosine(1516) in 16S rRNA + S-adenosyl-L-methionine = N(2)-methylguanosine(1516) in 16S rRNA + S-adenosyl-L-homocysteine + H(+). Functionally, specifically methylates the guanosine in position 1516 of 16S rRNA. The chain is Ribosomal RNA small subunit methyltransferase J from Salmonella heidelberg (strain SL476).